The chain runs to 883 residues: Alanine--tRNA ligase (883 aa).

His563, His567, Cys673, and His677 together coordinate Zn(2+).

The protein belongs to the class-II aminoacyl-tRNA synthetase family. Requires Zn(2+) as cofactor.

It is found in the cytoplasm. The catalysed reaction is tRNA(Ala) + L-alanine + ATP = L-alanyl-tRNA(Ala) + AMP + diphosphate. In terms of biological role, catalyzes the attachment of alanine to tRNA(Ala) in a two-step reaction: alanine is first activated by ATP to form Ala-AMP and then transferred to the acceptor end of tRNA(Ala). Also edits incorrectly charged Ser-tRNA(Ala) and Gly-tRNA(Ala) via its editing domain. The sequence is that of Alanine--tRNA ligase from Caulobacter sp. (strain K31).